Consider the following 217-residue polypeptide: Adenylate kinase (217 aa).

G10–T15 lines the ATP pocket. The NMP stretch occupies residues S30–V59. AMP-binding positions include T31, R36, L57 to V59, G85 to R88, and Q92. Residues G126–D163 form an LID region. R127 provides a ligand contact to ATP. Zn(2+)-binding residues include C130 and C133. T136–Y137 contacts ATP. C150 and C153 together coordinate Zn(2+). AMP contacts are provided by R160 and R171. Residue K199 coordinates ATP.

It belongs to the adenylate kinase family. As to quaternary structure, monomer.

Its subcellular location is the cytoplasm. The catalysed reaction is AMP + ATP = 2 ADP. The protein operates within purine metabolism; AMP biosynthesis via salvage pathway; AMP from ADP: step 1/1. Catalyzes the reversible transfer of the terminal phosphate group between ATP and AMP. Plays an important role in cellular energy homeostasis and in adenine nucleotide metabolism. The chain is Adenylate kinase from Thermoanaerobacter pseudethanolicus (strain ATCC 33223 / 39E) (Clostridium thermohydrosulfuricum).